The sequence spans 83 residues: Small ribosomal subunit protein bS20 (83 aa).

This sequence belongs to the bacterial ribosomal protein bS20 family.

Functionally, binds directly to 16S ribosomal RNA. This chain is Small ribosomal subunit protein bS20, found in Lactobacillus delbrueckii subsp. bulgaricus (strain ATCC 11842 / DSM 20081 / BCRC 10696 / JCM 1002 / NBRC 13953 / NCIMB 11778 / NCTC 12712 / WDCM 00102 / Lb 14).